The sequence spans 570 residues: Proline--tRNA ligase (570 aa).

It belongs to the class-II aminoacyl-tRNA synthetase family. ProS type 1 subfamily. Homodimer.

The protein resides in the cytoplasm. It catalyses the reaction tRNA(Pro) + L-proline + ATP = L-prolyl-tRNA(Pro) + AMP + diphosphate. Catalyzes the attachment of proline to tRNA(Pro) in a two-step reaction: proline is first activated by ATP to form Pro-AMP and then transferred to the acceptor end of tRNA(Pro). As ProRS can inadvertently accommodate and process non-cognate amino acids such as alanine and cysteine, to avoid such errors it has two additional distinct editing activities against alanine. One activity is designated as 'pretransfer' editing and involves the tRNA(Pro)-independent hydrolysis of activated Ala-AMP. The other activity is designated 'posttransfer' editing and involves deacylation of mischarged Ala-tRNA(Pro). The misacylated Cys-tRNA(Pro) is not edited by ProRS. The chain is Proline--tRNA ligase from Desulfotalea psychrophila (strain LSv54 / DSM 12343).